Consider the following 101-residue polypeptide: NAD(P)H-quinone oxidoreductase subunit 4L, chloroplastic (101 aa).

Transmembrane regions (helical) follow at residues 2-22 (MLEHVLVLSSYLLSIGIYGLI), 32-52 (MCLELILNAVNINFVTFSDLF), and 61-81 (IFSIFVIGIAAAEAAIGLAII).

This sequence belongs to the complex I subunit 4L family. NDH is composed of at least 16 different subunits, 5 of which are encoded in the nucleus.

It localises to the plastid. Its subcellular location is the chloroplast thylakoid membrane. The enzyme catalyses a plastoquinone + NADH + (n+1) H(+)(in) = a plastoquinol + NAD(+) + n H(+)(out). It catalyses the reaction a plastoquinone + NADPH + (n+1) H(+)(in) = a plastoquinol + NADP(+) + n H(+)(out). In terms of biological role, NDH shuttles electrons from NAD(P)H:plastoquinone, via FMN and iron-sulfur (Fe-S) centers, to quinones in the photosynthetic chain and possibly in a chloroplast respiratory chain. The immediate electron acceptor for the enzyme in this species is believed to be plastoquinone. Couples the redox reaction to proton translocation, and thus conserves the redox energy in a proton gradient. This Ranunculus macranthus (Large buttercup) protein is NAD(P)H-quinone oxidoreductase subunit 4L, chloroplastic.